A 447-amino-acid polypeptide reads, in one-letter code: GTPase Der (447 aa).

2 EngA-type G domains span residues 3-167 (PVIA…HLAD) and 180-353 (IRLA…ASAN). Residues 9 to 16 (GRPNVGKS), 56 to 60 (DTGGF), 119 to 122 (NKAE), 186 to 193 (GRPNVGKS), 233 to 237 (DTAGL), and 298 to 301 (NKWD) each bind GTP. The KH-like domain occupies 354–438 (RKMSTPVLTR…PMRIQMKSSH (85 aa)).

This sequence belongs to the TRAFAC class TrmE-Era-EngA-EngB-Septin-like GTPase superfamily. EngA (Der) GTPase family. As to quaternary structure, associates with the 50S ribosomal subunit.

Its function is as follows. GTPase that plays an essential role in the late steps of ribosome biogenesis. The polypeptide is GTPase Der (Polaromonas sp. (strain JS666 / ATCC BAA-500)).